The sequence spans 211 residues: Suppressor of RNA silencing p3 (211 aa).

It belongs to the tenuiviruses p3 protein family. In terms of assembly, homodimer.

Its subcellular location is the host cytoplasm. Functionally, acts as a suppressor of RNA-mediated gene silencing, also known as post-transcriptional gene silencing (PTGS), presumably through the binding of dsRNA. The chain is Suppressor of RNA silencing p3 from Avena sativa (Oat).